The sequence spans 183 residues: Peptide deformylase (183 aa).

Fe cation-binding residues include C111 and H154. The active site involves E155. Position 158 (H158) interacts with Fe cation.

Fe(2+) serves as cofactor.

The enzyme catalyses N-terminal N-formyl-L-methionyl-[peptide] + H2O = N-terminal L-methionyl-[peptide] + formate. Functionally, removes the formyl group from the N-terminal Met of newly synthesized proteins. Requires at least a dipeptide for an efficient rate of reaction. N-terminal L-methionine is a prerequisite for activity but the enzyme has broad specificity at other positions. This Staphylococcus aureus protein is Peptide deformylase.